We begin with the raw amino-acid sequence, 1656 residues long: Probable phospholipid-transporting ATPase DNF3 (1656 aa).

At 1–164 the chain is on the lumenal side; that stretch reads MGIADGQRRR…PRQLYAQFSK (164 aa). The disordered stretch occupies residues 36-74; it reads ELEDINESKTFSGSDNNDKDDRDETSGNYAAEEDYEMEE. Positions 51–60 are enriched in basic and acidic residues; that stretch reads NNDKDDRDET. The chain crosses the membrane as a helical span at residues 165–185; it reads LANTYFFIVAVLQMIPGWSTT. The Cytoplasmic portion of the chain corresponds to 186 to 451; it reads GTYTTIIPLC…RTKAPKLQRK (266 aa). Residues 452 to 472 traverse the membrane as a helical segment; it reads INMIIVFMVFVVATISLFSYL. The Lumenal segment spans residues 473–495; that stretch reads GHVLHKKKYIDQNKAWYLFQADA. Residues 496–516 traverse the membrane as a helical segment; the sequence is GVAPTIMSFIIMYNTVIPLSL. Residues 517–1157 lie on the Cytoplasmic side of the membrane; that stretch reads YVTMEIIKVV…ISKMNAVSQE (641 aa). Catalysis depends on Asp566, which acts as the 4-aspartylphosphate intermediate. ATP contacts are provided by Asp566, Lys567, and Thr568. Residue Asp566 participates in Mg(2+) binding. Thr568 is a binding site for Mg(2+). Ser627 is subject to Phosphoserine. Residues Glu765, Phe813, Ser815, Lys818, Lys838, Arg1034, Thr1035, Thr1114, Gly1115, Asp1116, 1167 to 1174, Arg1202, and Lys1208 contribute to the ATP site; that span reads VVVIDGAT. A helical membrane pass occupies residues 1158-1178; sequence VDSGNIAHCVVVIDGATMAMF. Residues 1179–1318 lie on the Lumenal side of the membrane; sequence EGNPTYMSVF…MFSGSSLYEP (140 aa). Residue Asp1229 coordinates Mg(2+). Residues Asn1232 and Asp1233 each contribute to the ATP site. Residues 1319 to 1339 traverse the membrane as a helical segment; that stretch reads WSLSMFNTLFTSLPVLCIGMF. Residues 1340-1365 are Cytoplasmic-facing; it reads EKDLKPMTLLTVPELYSYGRLSQGFN. The chain crosses the membrane as a helical span at residues 1366–1386; it reads WLIFMEWVILATTNSLIITFL. Residues 1387–1395 lie on the Lumenal side of the membrane; the sequence is NVVMWGMSS. Residues 1396–1416 traverse the membrane as a helical segment; that stretch reads LSDNTMYPLGLINFTAIVALI. Residues 1417–1432 lie on the Cytoplasmic side of the membrane; that stretch reads NVKSQFVEMHNRNWLA. A helical membrane pass occupies residues 1433 to 1453; sequence FTSVVLSCGGWLVWCCALPIL. Residues 1454 to 1473 lie on the Lumenal side of the membrane; that stretch reads NNTDQIYDVAYGFYNHFGKD. A helical transmembrane segment spans residues 1474–1494; that stretch reads ITFWCTSLVLALLPITLDIVY. Residues 1495–1656 lie on the Cytoplasmic side of the membrane; the sequence is KTFKVMIWPS…IIQARLKDLE (162 aa). Positions 1554–1576 are disordered; the sequence is PRTNSRASAKTHNSSIYSMSNGN.

This sequence belongs to the cation transport ATPase (P-type) (TC 3.A.3) family. Type IV subfamily. As to quaternary structure, component of a flippase complex consisting of DNF3 and YNR048W/CRF1. Interacts with YNR048W/CRF1; the interaction is direct and required for proper expression and endoplasmic reticulum (ER) export of either partner. It depends on Mg(2+) as a cofactor.

It is found in the golgi apparatus. The protein localises to the trans-Golgi network membrane. The protein resides in the endosome membrane. It catalyses the reaction ATP + H2O + phospholipidSide 1 = ADP + phosphate + phospholipidSide 2.. The enzyme catalyses a 1,2-diacyl-sn-glycero-3-phosphocholine(out) + ATP + H2O = a 1,2-diacyl-sn-glycero-3-phosphocholine(in) + ADP + phosphate + H(+). The catalysed reaction is a 1,2-diacyl-sn-glycero-3-phosphoethanolamine(out) + ATP + H2O = a 1,2-diacyl-sn-glycero-3-phosphoethanolamine(in) + ADP + phosphate + H(+). In terms of biological role, catalytic component of a P4-ATPase flippase complex which catalyzes the hydrolysis of ATP coupled to the transport of phosphatidylcholine and small amounts of phosphatidylethanolamine from the lumen to the cytosolic leaflet of the trans-Golgi network and ensures the maintenance of asymmetric distribution of phospholipids. May be involved in transport from early endosomes to the trans-Golgi network (TGN). This chain is Probable phospholipid-transporting ATPase DNF3 (DNF3), found in Saccharomyces cerevisiae (strain ATCC 204508 / S288c) (Baker's yeast).